Reading from the N-terminus, the 436-residue chain is Serine--tRNA ligase (436 aa).

Over residues 43-55 (TKSEQLKQKRNEV) the composition is skewed to basic and acidic residues. The tract at residues 43–69 (TKSEQLKQKRNEVSDQIAQAKRNKEDA) is disordered. 237-239 (TAE) lines the L-serine pocket. 268-270 (RSE) lines the ATP pocket. Glu291 provides a ligand contact to L-serine. ATP is bound at residue 355 to 358 (EISS). Ser390 contributes to the L-serine binding site.

Belongs to the class-II aminoacyl-tRNA synthetase family. Type-1 seryl-tRNA synthetase subfamily. Homodimer. The tRNA molecule binds across the dimer.

It localises to the cytoplasm. It carries out the reaction tRNA(Ser) + L-serine + ATP = L-seryl-tRNA(Ser) + AMP + diphosphate + H(+). The catalysed reaction is tRNA(Sec) + L-serine + ATP = L-seryl-tRNA(Sec) + AMP + diphosphate + H(+). It functions in the pathway aminoacyl-tRNA biosynthesis; selenocysteinyl-tRNA(Sec) biosynthesis; L-seryl-tRNA(Sec) from L-serine and tRNA(Sec): step 1/1. Its function is as follows. Catalyzes the attachment of serine to tRNA(Ser). Is also able to aminoacylate tRNA(Sec) with serine, to form the misacylated tRNA L-seryl-tRNA(Sec), which will be further converted into selenocysteinyl-tRNA(Sec). In Lactobacillus gasseri (strain ATCC 33323 / DSM 20243 / BCRC 14619 / CIP 102991 / JCM 1131 / KCTC 3163 / NCIMB 11718 / NCTC 13722 / AM63), this protein is Serine--tRNA ligase.